The following is a 140-amino-acid chain: Large ribosomal subunit protein uL14 (140 aa).

This sequence belongs to the universal ribosomal protein uL14 family.

This is Large ribosomal subunit protein uL14 (RpL23-A) from Aedes aegypti (Yellowfever mosquito).